The following is a 244-amino-acid chain: Cell division protein ZapD (244 aa).

The protein belongs to the ZapD family. As to quaternary structure, interacts with FtsZ.

The protein localises to the cytoplasm. Its function is as follows. Cell division factor that enhances FtsZ-ring assembly. Directly interacts with FtsZ and promotes bundling of FtsZ protofilaments, with a reduction in FtsZ GTPase activity. This chain is Cell division protein ZapD, found in Shewanella sp. (strain MR-4).